We begin with the raw amino-acid sequence, 445 residues long: mRNA cleavage and polyadenylation factor CLP1 (445 aa).

ATP contacts are provided by residues E33 and S131 to S136.

The protein belongs to the Clp1 family. Clp1 subfamily. Component of a pre-mRNA cleavage factor complex. Interacts directly with PCF11.

It localises to the nucleus. Functionally, required for endonucleolytic cleavage during polyadenylation-dependent pre-mRNA 3'-end formation. In Eremothecium gossypii (strain ATCC 10895 / CBS 109.51 / FGSC 9923 / NRRL Y-1056) (Yeast), this protein is mRNA cleavage and polyadenylation factor CLP1.